The chain runs to 349 residues: Anthranilate phosphoribosyltransferase (349 aa).

5-phospho-alpha-D-ribose 1-diphosphate-binding positions include Gly82, 85–86, 92–95, 110–118, and Ser122; these read GD, NVST, and KHGNRGVSS. Gly82 is an anthranilate binding site. Ser94 serves as a coordination point for Mg(2+). Asn113 is an anthranilate binding site. Anthranilate is bound at residue Arg168. 2 residues coordinate Mg(2+): Asp227 and Glu228.

The protein belongs to the anthranilate phosphoribosyltransferase family. Homodimer. Mg(2+) serves as cofactor.

It catalyses the reaction N-(5-phospho-beta-D-ribosyl)anthranilate + diphosphate = 5-phospho-alpha-D-ribose 1-diphosphate + anthranilate. It functions in the pathway amino-acid biosynthesis; L-tryptophan biosynthesis; L-tryptophan from chorismate: step 2/5. Its function is as follows. Catalyzes the transfer of the phosphoribosyl group of 5-phosphorylribose-1-pyrophosphate (PRPP) to anthranilate to yield N-(5'-phosphoribosyl)-anthranilate (PRA). The protein is Anthranilate phosphoribosyltransferase of Acinetobacter baumannii (strain ATCC 17978 / DSM 105126 / CIP 53.77 / LMG 1025 / NCDC KC755 / 5377).